A 156-amino-acid polypeptide reads, in one-letter code: 6,7-dimethyl-8-ribityllumazine synthase (156 aa).

Residues F23, 57-59 (AYE), and 81-83 (AII) contribute to the 5-amino-6-(D-ribitylamino)uracil site. A (2S)-2-hydroxy-3-oxobutyl phosphate-binding site is contributed by 86-87 (GT). The active-site Proton donor is H89. F114 contacts 5-amino-6-(D-ribitylamino)uracil. Residue R128 coordinates (2S)-2-hydroxy-3-oxobutyl phosphate.

The protein belongs to the DMRL synthase family.

The catalysed reaction is (2S)-2-hydroxy-3-oxobutyl phosphate + 5-amino-6-(D-ribitylamino)uracil = 6,7-dimethyl-8-(1-D-ribityl)lumazine + phosphate + 2 H2O + H(+). The protein operates within cofactor biosynthesis; riboflavin biosynthesis; riboflavin from 2-hydroxy-3-oxobutyl phosphate and 5-amino-6-(D-ribitylamino)uracil: step 1/2. Its function is as follows. Catalyzes the formation of 6,7-dimethyl-8-ribityllumazine by condensation of 5-amino-6-(D-ribitylamino)uracil with 3,4-dihydroxy-2-butanone 4-phosphate. This is the penultimate step in the biosynthesis of riboflavin. This Helicobacter pylori (strain Shi470) protein is 6,7-dimethyl-8-ribityllumazine synthase.